Reading from the N-terminus, the 635-residue chain is MGKVIGIDLGTTNSCVAVMEGGQPKVIENAEGARTTPSIVAFTKDSERLIGQPAKRQAVTNSENTIFAVKRLIGRRFDDPVTKRDTELVPYHIVRGSNGDAWVKAGGQDYSPSQISAFILQKMKETAESYLGETVDQAVITVPAYFNDAQRQATKDAGKIAGLEVLRIINEPTAAALAYGLDKNDGKTIAVYDLGGGTFDISILEIGDGVFEVKATNGDTFLGGEDFDTKIVSYLAEEFKKAEGIDLTKDRLALQRLKEAAEKAKIELSSAQTTEVNLPFITADATGPKHLVKTISRAELERLVADLIDRTLEPVKKALADAGVKASDIDDVVMVGGMTRMPKVRQVVKEFFGKEPHTGVNPDEVVAMGAAIQAGVLQGDVKDVLLLDVTPLSLGIETLGGVFTRMIDRNTTIPTKKSQVYSTAEDNQNAVTIRVFQGEREMAADNKLLGQFDLVGIPPAPRGVPQIEVTFDIDANGIVNVSAKDKGTGKEQQIRIQASGGLSEGDIDKMVKDAEKFAADDKHRRELAEAKNNGDSLVHTTERQLTELGDKVDAALKTEVEAAVAAVKTALEGEDVAQINEKTQALGQVAMKLGQALYEQDQANNERHDTPETEKAEGDNVVDAEFQEIDDQDKK.

Phosphothreonine; by autocatalysis is present on threonine 198. Residues 597-635 (LYEQDQANNERHDTPETEKAEGDNVVDAEFQEIDDQDKK) form a disordered region. The span at 604 to 618 (NNERHDTPETEKAEG) shows a compositional bias: basic and acidic residues. Positions 620 to 635 (NVVDAEFQEIDDQDKK) are enriched in acidic residues.

It belongs to the heat shock protein 70 family.

Acts as a chaperone. The polypeptide is Chaperone protein DnaK (Zymomonas mobilis subsp. mobilis (strain ATCC 31821 / ZM4 / CP4)).